A 468-amino-acid polypeptide reads, in one-letter code: ATP synthase subunit beta (468 aa).

155–162 (GGAGVGKT) is an ATP binding site.

It belongs to the ATPase alpha/beta chains family. As to quaternary structure, F-type ATPases have 2 components, CF(1) - the catalytic core - and CF(0) - the membrane proton channel. CF(1) has five subunits: alpha(3), beta(3), gamma(1), delta(1), epsilon(1). CF(0) has three main subunits: a(1), b(2) and c(9-12). The alpha and beta chains form an alternating ring which encloses part of the gamma chain. CF(1) is attached to CF(0) by a central stalk formed by the gamma and epsilon chains, while a peripheral stalk is formed by the delta and b chains.

It is found in the cell membrane. It carries out the reaction ATP + H2O + 4 H(+)(in) = ADP + phosphate + 5 H(+)(out). Its function is as follows. Produces ATP from ADP in the presence of a proton gradient across the membrane. The catalytic sites are hosted primarily by the beta subunits. The polypeptide is ATP synthase subunit beta (Streptococcus uberis (strain ATCC BAA-854 / 0140J)).